The sequence spans 254 residues: Alcohol dehydrogenase 2 (254 aa).

Residue Phe10–Leu33 coordinates NAD(+). Ser138 is a binding site for substrate. The Proton acceptor role is filled by Tyr151.

Belongs to the short-chain dehydrogenases/reductases (SDR) family. Homodimer.

It carries out the reaction a primary alcohol + NAD(+) = an aldehyde + NADH + H(+). It catalyses the reaction a secondary alcohol + NAD(+) = a ketone + NADH + H(+). The chain is Alcohol dehydrogenase 2 (Adh2) from Drosophila buzzatii (Fruit fly).